A 125-amino-acid polypeptide reads, in one-letter code: Large ribosomal subunit protein bL12 (125 aa).

It belongs to the bacterial ribosomal protein bL12 family. Homodimer. Part of the ribosomal stalk of the 50S ribosomal subunit. Forms a multimeric L10(L12)X complex, where L10 forms an elongated spine to which 2 to 4 L12 dimers bind in a sequential fashion. Binds GTP-bound translation factors.

In terms of biological role, forms part of the ribosomal stalk which helps the ribosome interact with GTP-bound translation factors. Is thus essential for accurate translation. This Thermoanaerobacter pseudethanolicus (strain ATCC 33223 / 39E) (Clostridium thermohydrosulfuricum) protein is Large ribosomal subunit protein bL12.